Reading from the N-terminus, the 511-residue chain is Cytochrome P450 monooxyhenase eriC (511 aa).

Residues 2–22 (VLADFISIPTVSIACLAVLGI) form a helical membrane-spanning segment. Cysteine 445 lines the heme pocket.

Belongs to the cytochrome P450 family. Heme serves as cofactor.

The protein localises to the membrane. The catalysed reaction is erinacol + reduced [NADPH--hemoprotein reductase] + O2 = cyathadiol + oxidized [NADPH--hemoprotein reductase] + H2O + H(+). The protein operates within secondary metabolite biosynthesis. Functionally, cytochrome P450 monooxygenase; part of the gene cluster that mediates the biosynthesis of erinacines, cyathane-xylosides that show unique biological activities, including leishmanicidal activity, stimulating activity for nerve growth-factor synthesis, and agonistic activity toward the kappa opioid receptor. Within the pathway, eriC hydroxylates erinacol at C-15 of the seven-membered ring to yield cyathadiol. The first step of the erinacines biosynthesis pathway is catalyzed by the geranylgeranyl diphosphate (GGPP) synthase eriE via conversion of farnesyl pyrophosphate and isopentyl pyrophosphate into geranylgeranyl pyrophosphate (GGPP). GGPP is then substrate of the diterpene cyclase eriG for the production of cyatha-3,12-diene. The cytochrome P450 monooxygenase eriI then hydroxylates cyatha-3,12-diene at C-14 of the seven-membered ring to produce erinacol, which is further hydroxylated at C-15 by the cytochrome P450 monooxygenase eriC to yield cyathadiol. The cytochrome P450 monooxygenase eriA then catalyzes C-11 hydroxylation in the presence of the short chain dehydrogenase/reductase (SDR) eriH, which leads to the production of cyathatriol. The acetyltransferase eriL converts cyathatriol into 11-O-acetyl-cyathatriol. The SDR eriH catalyzes further oxidation of 11-O-acetyl-cyathatriol into 1-O-acetylcyathin A3. Finally, the glycosyl transferase eriJ tranfers xylose from UDP-xylose onto C-14 of 11-O-acetyl-cyathatriol to form eracine Q. EriJ is also able to convert 11-O-acetyl-cyathatriol to eracine Q2 by using UDP-D-glucose as cosubstrate, but at a lower rate. The sequence is that of Cytochrome P450 monooxyhenase eriC from Hericium erinaceus (Lion's mane mushroom).